Here is a 630-residue protein sequence, read N- to C-terminus: Membrane protein insertase YidC (630 aa).

The next 5 helical transmembrane spans lie at 10–30 (LMFLVCAFAILIGYQFLVMGP), 396–416 (MVGNFGVAIMLLTVALKLILF), 470–490 (VPMLIQIPIFYSLYKVLTVTI), 528–548 (LIGAFLSGPLHIGVWPLLYGF), and 571–591 (FFPIVFTFTLSQFAVGLVIYW).

It belongs to the OXA1/ALB3/YidC family. Type 1 subfamily. Interacts with the Sec translocase complex via SecD. Specifically interacts with transmembrane segments of nascent integral membrane proteins during membrane integration.

The protein resides in the cell inner membrane. Its function is as follows. Required for the insertion and/or proper folding and/or complex formation of integral membrane proteins into the membrane. Involved in integration of membrane proteins that insert both dependently and independently of the Sec translocase complex, as well as at least some lipoproteins. Aids folding of multispanning membrane proteins. The chain is Membrane protein insertase YidC from Caulobacter sp. (strain K31).